The following is a 770-amino-acid chain: 3-isopropylmalate dehydratase (770 aa).

[4Fe-4S] cluster contacts are provided by cysteine 354, cysteine 415, and cysteine 418.

It belongs to the aconitase/IPM isomerase family. In terms of assembly, monomer. [4Fe-4S] cluster is required as a cofactor.

It catalyses the reaction (2R,3S)-3-isopropylmalate = (2S)-2-isopropylmalate. It participates in amino-acid biosynthesis; L-leucine biosynthesis; L-leucine from 3-methyl-2-oxobutanoate: step 2/4. Functionally, catalyzes the isomerization between 2-isopropylmalate and 3-isopropylmalate, via the formation of 2-isopropylmaleate. The protein is 3-isopropylmalate dehydratase (LEU1) of Candida maltosa (Yeast).